Here is a 600-residue protein sequence, read N- to C-terminus: Elongation factor 4 (600 aa).

Residues 5 to 187 (SNIRNFSIIA…ALVERIPAPT (183 aa)) enclose the tr-type G domain. Residues 17-22 (DHGKST) and 134-137 (NKID) contribute to the GTP site.

The protein belongs to the TRAFAC class translation factor GTPase superfamily. Classic translation factor GTPase family. LepA subfamily.

It is found in the cell inner membrane. It catalyses the reaction GTP + H2O = GDP + phosphate + H(+). Its function is as follows. Required for accurate and efficient protein synthesis under certain stress conditions. May act as a fidelity factor of the translation reaction, by catalyzing a one-codon backward translocation of tRNAs on improperly translocated ribosomes. Back-translocation proceeds from a post-translocation (POST) complex to a pre-translocation (PRE) complex, thus giving elongation factor G a second chance to translocate the tRNAs correctly. Binds to ribosomes in a GTP-dependent manner. This chain is Elongation factor 4, found in Psychrobacter sp. (strain PRwf-1).